The sequence spans 397 residues: Ribosomal RNA large subunit methyltransferase I (397 aa).

The PUA domain maps to 2-81; the sequence is SAQVILQPSR…ESIDNGFFLR (80 aa).

This sequence belongs to the methyltransferase superfamily. RlmI family.

It localises to the cytoplasm. The enzyme catalyses cytidine(1962) in 23S rRNA + S-adenosyl-L-methionine = 5-methylcytidine(1962) in 23S rRNA + S-adenosyl-L-homocysteine + H(+). Specifically methylates the cytosine at position 1962 (m5C1962) of 23S rRNA. This is Ribosomal RNA large subunit methyltransferase I from Alteromonas mediterranea (strain DSM 17117 / CIP 110805 / LMG 28347 / Deep ecotype).